The sequence spans 606 residues: Homeobox protein B-H1 (606 aa).

The span at 1–14 (MKDSMSILTQTPSE) shows a compositional bias: polar residues. Disordered stretches follow at residues 1–65 (MKDS…PAVA), 104–188 (YKQQ…HPHA), 261–340 (APAG…AFTD), and 508–606 (AAAN…QIQV). A compositionally biased stretch (basic residues) spans 21 to 40 (QLHHHLSHHHHPALHHHPVL). Positions 41–65 (QHHYSLQQQHQQQQQQQPPAPPAVA) are enriched in low complexity. A compositionally biased stretch (basic residues) spans 108–118 (QQHHHHHHQSH). Over residues 119 to 138 (HNNNNHSGGSSGGTSPTHHN) the composition is skewed to low complexity. Residues 166-188 (HHLHPQSHPHPHPHPHSHPHPHA) are compositionally biased toward basic residues. The span at 266 to 284 (ELDDSSDYHEENEDCDSDE) shows a compositional bias: acidic residues. The span at 286 to 295 (GSAGGGGGGS) shows a compositional bias: gly residues. A compositionally biased stretch (basic and acidic residues) spans 297-314 (HMDDHSVCSNGGKDDDGN). Over residues 315-325 (SIKSGSTSDMS) the composition is skewed to polar residues. A DNA-binding region (homeobox) is located at residues 331–390 (QRKARTAFTDHQLQTLEKSFERQKYLSVQERQELAHKLDLSDCQVKTWYQNRRTKWMRQT). A compositionally biased stretch (pro residues) spans 513 to 522 (GGPPPPPPPS). Positions 523–534 (SAAAATGGSPSP) are enriched in low complexity. A compositionally biased stretch (pro residues) spans 561 to 576 (ASPPLPLPLARPPSTP).

This sequence belongs to the Antp homeobox family. In terms of tissue distribution, abundant in the eye-antenna imaginal disk.

It is found in the nucleus. Its function is as follows. Functionally required in R1 and R6 receptor cells and primary pigment cells for normal eye development. The protein is Homeobox protein B-H1 (B-H1) of Drosophila ananassae (Fruit fly).